The primary structure comprises 211 residues: Protein N-terminal glutamine amidohydrolase (211 aa).

Active-site residues include Cys-24, His-78, and Asp-94.

Belongs to the NTAQ1 family. Monomer.

It carries out the reaction N-terminal L-glutaminyl-[protein] + H2O = N-terminal L-glutamyl-[protein] + NH4(+). Mediates the side-chain deamidation of N-terminal glutamine residues to glutamate, an important step in N-end rule pathway of protein degradation. Conversion of the resulting N-terminal glutamine to glutamate renders the protein susceptible to arginylation, polyubiquitination and degradation as specified by the N-end rule. Does not act on substrates with internal or C-terminal glutamine and does not act on non-glutamine residues in any position. The protein is Protein N-terminal glutamine amidohydrolase (tun) of Anopheles gambiae (African malaria mosquito).